Reading from the N-terminus, the 220-residue chain is Octanoyltransferase (220 aa).

The region spanning 34–209 is the BPL/LPL catalytic domain; the sequence is ENSQDEIWVV…TLSQELGLAN (176 aa). Substrate is bound by residues 73–80, 140–142, and 153–155; these read RGGQVTYH, SLG, and GLA. Cys-171 serves as the catalytic Acyl-thioester intermediate.

The protein belongs to the LipB family.

The protein localises to the cytoplasm. The enzyme catalyses octanoyl-[ACP] + L-lysyl-[protein] = N(6)-octanoyl-L-lysyl-[protein] + holo-[ACP] + H(+). Its pathway is protein modification; protein lipoylation via endogenous pathway; protein N(6)-(lipoyl)lysine from octanoyl-[acyl-carrier-protein]: step 1/2. Its function is as follows. Catalyzes the transfer of endogenously produced octanoic acid from octanoyl-acyl-carrier-protein onto the lipoyl domains of lipoate-dependent enzymes. Lipoyl-ACP can also act as a substrate although octanoyl-ACP is likely to be the physiological substrate. The protein is Octanoyltransferase of Shewanella piezotolerans (strain WP3 / JCM 13877).